A 274-amino-acid chain; its full sequence is ATP synthase subunit a (274 aa).

Helical transmembrane passes span 43 to 63, 103 to 123, 149 to 169, 223 to 243, and 245 to 265; these read TLNIDSLFFSVVLGLAFLFVF, VIAPLALTVFVWVLLMNMMDL, DVSITLSMALGVFILILFYSI, LIFILIAGLLPWWSQWMLSLP, and AIFHILIITLQAFIFMVLTIV.

It belongs to the ATPase A chain family. F-type ATPases have 2 components, CF(1) - the catalytic core - and CF(0) - the membrane proton channel. CF(1) has five subunits: alpha(3), beta(3), gamma(1), delta(1), epsilon(1). CF(0) has three main subunits: a(1), b(2) and c(9-12). The alpha and beta chains form an alternating ring which encloses part of the gamma chain. CF(1) is attached to CF(0) by a central stalk formed by the gamma and epsilon chains, while a peripheral stalk is formed by the delta and b chains.

It localises to the cell inner membrane. Its function is as follows. Key component of the proton channel; it plays a direct role in the translocation of protons across the membrane. This is ATP synthase subunit a from Yersinia enterocolitica serotype O:8 / biotype 1B (strain NCTC 13174 / 8081).